The primary structure comprises 339 residues: Aspartate carbamoyltransferase catalytic subunit (339 aa).

Positions 60 and 61 each coordinate carbamoyl phosphate. Residue lysine 88 coordinates L-aspartate. Arginine 110, histidine 143, and glutamine 146 together coordinate carbamoyl phosphate. Arginine 183 and arginine 254 together coordinate L-aspartate. Residues glycine 295 and proline 296 each contribute to the carbamoyl phosphate site.

Belongs to the aspartate/ornithine carbamoyltransferase superfamily. ATCase family. As to quaternary structure, heterododecamer (2C3:3R2) of six catalytic PyrB chains organized as two trimers (C3), and six regulatory PyrI chains organized as three dimers (R2).

The catalysed reaction is carbamoyl phosphate + L-aspartate = N-carbamoyl-L-aspartate + phosphate + H(+). The protein operates within pyrimidine metabolism; UMP biosynthesis via de novo pathway; (S)-dihydroorotate from bicarbonate: step 2/3. Functionally, catalyzes the condensation of carbamoyl phosphate and aspartate to form carbamoyl aspartate and inorganic phosphate, the committed step in the de novo pyrimidine nucleotide biosynthesis pathway. This is Aspartate carbamoyltransferase catalytic subunit from Prochlorococcus marinus (strain MIT 9312).